A 245-amino-acid chain; its full sequence is Orotidine 5'-phosphate decarboxylase (245 aa).

Residues D22, K44, D71–T80, T131, R192, Q201, G221, and R222 contribute to the substrate site. K73 acts as the Proton donor in catalysis.

This sequence belongs to the OMP decarboxylase family. Type 1 subfamily. Homodimer.

The enzyme catalyses orotidine 5'-phosphate + H(+) = UMP + CO2. It functions in the pathway pyrimidine metabolism; UMP biosynthesis via de novo pathway; UMP from orotate: step 2/2. Its function is as follows. Catalyzes the decarboxylation of orotidine 5'-monophosphate (OMP) to uridine 5'-monophosphate (UMP). The protein is Orotidine 5'-phosphate decarboxylase of Escherichia coli O81 (strain ED1a).